Consider the following 138-residue polypeptide: Basic phospholipase A2 Cll-N6 (138 aa).

Positions M1–G16 are cleaved as a signal peptide. Disulfide bonds link C42-C131, C44-C60, C59-C111, C65-C138, C66-C104, C73-C97, and C91-C102. The Ca(2+) site is built by Y43, G45, and G47. H63 is a catalytic residue. Residue D64 coordinates Ca(2+). The active site involves D105.

Monomer. Requires Ca(2+) as cofactor. As to expression, expressed by the venom gland.

It is found in the secreted. It catalyses the reaction a 1,2-diacyl-sn-glycero-3-phosphocholine + H2O = a 1-acyl-sn-glycero-3-phosphocholine + a fatty acid + H(+). Functionally, snake venom phospholipase A2 (PLA2) that shows myotoxic activities. PLA2 catalyzes the calcium-dependent hydrolysis of the 2-acyl groups in 3-sn-phosphoglycerides. This is Basic phospholipase A2 Cll-N6 from Crotalus lepidus lepidus (Mottled rock rattlesnake).